Consider the following 152-residue polypeptide: Succinate dehydrogenase [ubiquinone] cytochrome b small subunit A, mitochondrial (152 aa).

The N-terminal 21 residues, 1 to 21, are a transit peptide targeting the mitochondrion; the sequence is MVTVLRLSSLCRANRASAFKS. Over 22–56 the chain is Mitochondrial matrix; the sequence is LLIRPVPCLSQDLHTVQTSQIHTSQNHHAASKAAS. Residues 57–78 form a helical membrane-spanning segment; sequence LHWTSERALSVALLGLLPAAYL. Topologically, residues 79 to 83 are mitochondrial intermembrane; that stretch reads YPGAA. Residues 84 to 104 form a helical membrane-spanning segment; the sequence is VDYSLAAALTLHGHWGLGQVV. His-95 contacts heme b. Residues 105-113 are Mitochondrial matrix-facing; that stretch reads TDYVHGDAK. Tyr-107 serves as a coordination point for a ubiquinone. The helical transmembrane segment at 114–135 threads the bilayer; that stretch reads IKLANTSLFALSALTFAGLCYF. The Mitochondrial intermembrane segment spans residues 136–152; sequence NYHDVGICKAVAMLWSL.

It belongs to the CybS family. Component of complex II composed of four subunits: the flavoprotein (FP) SDHA, iron-sulfur protein (IP) SDHB, and a cytochrome b560 composed of SDHC and SDHD.

Its subcellular location is the mitochondrion inner membrane. The protein operates within carbohydrate metabolism; tricarboxylic acid cycle. In terms of biological role, membrane-anchoring subunit of succinate dehydrogenase (SDH) that is involved in complex II of the mitochondrial electron transport chain and is responsible for transferring electrons from succinate to ubiquinone (coenzyme Q). SDH also oxidizes malate to the non-canonical enol form of oxaloacetate, enol-oxaloacetate. Enol-oxaloacetate, which is a potent inhibitor of the succinate dehydrogenase activity, is further isomerized into keto-oxaloacetate. This chain is Succinate dehydrogenase [ubiquinone] cytochrome b small subunit A, mitochondrial (sdhd-a), found in Xenopus laevis (African clawed frog).